A 539-amino-acid chain; its full sequence is Fucosyltransferase 2 (539 aa).

At 1–5 the chain is on the cytoplasmic side; the sequence is MRITE. Residues 6 to 26 traverse the membrane as a helical; Signal-anchor for type II membrane protein segment; that stretch reads ILALFMVLVPVSLVIVAMFGY. Residues 27–539 lie on the Lumenal side of the membrane; sequence DQGNGFVQAS…SWGLKLVDNF (513 aa). Residues N44, N231, and N482 are each glycosylated (N-linked (GlcNAc...) asparagine).

The protein belongs to the glycosyltransferase 37 family. As to expression, expressed in roots, stems, leaves, flowers, siliques and seedlings.

The protein localises to the golgi apparatus. It localises to the golgi stack membrane. Its pathway is protein modification; protein glycosylation. Its function is as follows. May be involved in cell wall biosynthesis. May act as a fucosyltransferase. The chain is Fucosyltransferase 2 (FUT2) from Arabidopsis thaliana (Mouse-ear cress).